The sequence spans 200 residues: Probable molybdenum cofactor guanylyltransferase (200 aa).

GTP is bound by residues 9 to 11 (LAG), Lys-21, Asp-69, and Asp-100. Asp-100 lines the Mg(2+) pocket.

This sequence belongs to the MobA family. Mg(2+) serves as cofactor.

It localises to the cytoplasm. It carries out the reaction Mo-molybdopterin + GTP + H(+) = Mo-molybdopterin guanine dinucleotide + diphosphate. In terms of biological role, transfers a GMP moiety from GTP to Mo-molybdopterin (Mo-MPT) cofactor (Moco or molybdenum cofactor) to form Mo-molybdopterin guanine dinucleotide (Mo-MGD) cofactor. In Bacillus cereus (strain B4264), this protein is Probable molybdenum cofactor guanylyltransferase.